The chain runs to 295 residues: ATP synthase gamma chain (295 aa).

The protein belongs to the ATPase gamma chain family. As to quaternary structure, F-type ATPases have 2 components, CF(1) - the catalytic core - and CF(0) - the membrane proton channel. CF(1) has five subunits: alpha(3), beta(3), gamma(1), delta(1), epsilon(1). CF(0) has three main subunits: a, b and c.

The protein localises to the cell membrane. Produces ATP from ADP in the presence of a proton gradient across the membrane. The gamma chain is believed to be important in regulating ATPase activity and the flow of protons through the CF(0) complex. The polypeptide is ATP synthase gamma chain (Desulforudis audaxviator (strain MP104C)).